The following is a 384-amino-acid chain: Lipoprotein LprN (384 aa).

Positions 1 to 20 are cleaved as a signal peptide; sequence MNRIWLRAIILTASSALLAG. Cys-21 is lipidated: N-palmitoyl cysteine. Cys-21 carries the S-diacylglycerol cysteine lipid modification.

In terms of processing, lipidated upon expression in E.coli.

The protein localises to the cell membrane. Stimulates the host (mouse) immune response; lipidated protein produced in E.coli stimulates T-cell proliferation in mice previously sensitized with LprN. Spleenocytes from these mice produce increased amounts of TNF-alpha and IFN-gamma, as well as somewhat increased nitric oxide levels, upon subsequent challenge with LprN. Previously sensitized mice infected with M.tuberculosis have an exacerbated disease response, suggesting this lipoprotein may down-regulate the host's immune response. This Mycobacterium tuberculosis (strain ATCC 25618 / H37Rv) protein is Lipoprotein LprN (lprN).